Consider the following 513-residue polypeptide: CUGBP Elav-like family member 2 (513 aa).

3 RRM domains span residues 35-118 (IKMF…PADS), 127-207 (RKLF…FADT), and 428-506 (ANLF…LKRS).

This sequence belongs to the CELF/BRUNOL family.

The protein resides in the nucleus. Its subcellular location is the cytoplasm. RNA-binding protein implicated in the regulation of several post-transcriptional events. May be involved in pre-mRNA alternative splicing, mRNA translation repression and stability. The chain is CUGBP Elav-like family member 2 (celf2) from Xenopus tropicalis (Western clawed frog).